Consider the following 244-residue polypeptide: L-xylulose reductase (244 aa).

Methionine 1 is subject to N-acetylmethionine. 11 to 39 serves as a coordination point for NADP(+); it reads LVTGAGKGIGRSTVLALKAAGAQVVAVSR. Omega-N-methylarginine is present on arginine 21. Serine 136 lines the substrate pocket. Tyrosine 149 functions as the Proton acceptor in the catalytic mechanism. Residue lysine 153 is part of the active site.

It belongs to the short-chain dehydrogenases/reductases (SDR) family. As to quaternary structure, homotetramer. In terms of tissue distribution, highly expressed in kidney and liver. Expressed in epididymis. Expressed at intermediate level in lung. Weakly expressed in brain, heart, spleen and testis.

Its subcellular location is the membrane. It catalyses the reaction xylitol + NADP(+) = L-xylulose + NADPH + H(+). Functionally, catalyzes the NADPH-dependent reduction of several pentoses, tetroses, trioses, alpha-dicarbonyl compounds and L-xylulose. Participates in the uronate cycle of glucose metabolism. May play a role in the water absorption and cellular osmoregulation in the proximal renal tubules by producing xylitol, an osmolyte, thereby preventing osmolytic stress from occurring in the renal tubules. The protein is L-xylulose reductase (DCXR) of Cavia porcellus (Guinea pig).